We begin with the raw amino-acid sequence, 487 residues long: Aspartyl/glutamyl-tRNA(Asn/Gln) amidotransferase subunit B (487 aa).

The protein belongs to the GatB/GatE family. GatB subfamily. Heterotrimer of A, B and C subunits.

It carries out the reaction L-glutamyl-tRNA(Gln) + L-glutamine + ATP + H2O = L-glutaminyl-tRNA(Gln) + L-glutamate + ADP + phosphate + H(+). The enzyme catalyses L-aspartyl-tRNA(Asn) + L-glutamine + ATP + H2O = L-asparaginyl-tRNA(Asn) + L-glutamate + ADP + phosphate + 2 H(+). Allows the formation of correctly charged Asn-tRNA(Asn) or Gln-tRNA(Gln) through the transamidation of misacylated Asp-tRNA(Asn) or Glu-tRNA(Gln) in organisms which lack either or both of asparaginyl-tRNA or glutaminyl-tRNA synthetases. The reaction takes place in the presence of glutamine and ATP through an activated phospho-Asp-tRNA(Asn) or phospho-Glu-tRNA(Gln). This Leptospira biflexa serovar Patoc (strain Patoc 1 / Ames) protein is Aspartyl/glutamyl-tRNA(Asn/Gln) amidotransferase subunit B.